A 315-amino-acid polypeptide reads, in one-letter code: 4-diphosphocytidyl-2-C-methyl-D-erythritol kinase (315 aa).

K26 is a catalytic residue. 111–121 is a binding site for ATP; the sequence is PLAGGLAGGSA. D153 is an active-site residue.

The protein belongs to the GHMP kinase family. IspE subfamily.

The catalysed reaction is 4-CDP-2-C-methyl-D-erythritol + ATP = 4-CDP-2-C-methyl-D-erythritol 2-phosphate + ADP + H(+). Its pathway is isoprenoid biosynthesis; isopentenyl diphosphate biosynthesis via DXP pathway; isopentenyl diphosphate from 1-deoxy-D-xylulose 5-phosphate: step 3/6. Catalyzes the phosphorylation of the position 2 hydroxy group of 4-diphosphocytidyl-2C-methyl-D-erythritol. The protein is 4-diphosphocytidyl-2-C-methyl-D-erythritol kinase of Salinispora arenicola (strain CNS-205).